A 116-amino-acid polypeptide reads, in one-letter code: Small ribosomal subunit protein uS13m (116 aa).

Belongs to the universal ribosomal protein uS13 family. In terms of assembly, part of the small ribosomal subunit.

The protein resides in the mitochondrion. Its function is as follows. Located at the top of the head of the small subunit, it contacts several helices of the 18S rRNA. This is Small ribosomal subunit protein uS13m (RPS13) from Nicotiana tabacum (Common tobacco).